The following is a 539-amino-acid chain: Polyol transporter 5 (539 aa).

Over residues 1 to 11 the composition is skewed to polar residues; sequence MTGATPENRTA. The tract at residues 1–24 is disordered; that stretch reads MTGATPENRTAPSPPPVKHVPESV. 12 helical membrane-spanning segments follow: residues 37 to 57, 73 to 93, 104 to 124, 127 to 147, 165 to 185, 196 to 216, 296 to 316, 333 to 353, 364 to 384, 391 to 411, 433 to 453, and 463 to 483; these read FACA…IGVM, LQIG…SCAA, YTIV…GLSP, AFLM…LMIA, SFPE…NLAF, LMLG…LAMP, IAAI…VVLF, LLAT…ATFL, LTSV…LTII, VMWA…TFSI, GSSM…ISFL, and GAFY…YTFL. Composition is skewed to basic and acidic residues over residues 503 to 514 and 530 to 539; these read WRDSKSKPKGNP and QWKEGDTQSS. Residues 503-539 are disordered; the sequence is WRDSKSKPKGNPEKTVPNPEVEIGSNKQWKEGDTQSS.

Belongs to the major facilitator superfamily. Sugar transporter (TC 2.A.1.1) family. Highly expressed in roots. Expressed in vascular tissue of leaves, sepals and siliques.

The protein localises to the cell membrane. Plasma membrane broad-spectrum sugar-proton symporter. Mediates the uptake of linear polyols such as sorbitol, xylitol, erythritol or glycerol. Can transport the cyclic polyol myo-inositol and different hexoses, pentoses (including ribose), tetroses and sugar alcohols. The protein is Polyol transporter 5 (PLT5) of Arabidopsis thaliana (Mouse-ear cress).